Consider the following 557-residue polypeptide: Intraflagellar transport protein 56 (557 aa).

Residues 1-30 form a disordered region; sequence MLLSRMKPAVGGEASTSSNEKKRKNKSKKI. The span at 21 to 30 shows a compositional bias: basic residues; it reads KKRKNKSKKI. TPR repeat units follow at residues 60 to 93, 95 to 128, 154 to 187, and 471 to 504; these read EHAD…PDCP, DVWV…LQNR, TEDQ…NREF, and ANDC…EGKR.

Belongs to the IFT56 family. As to quaternary structure, component of the IFT complex B.

The protein localises to the cell projection. The protein resides in the cilium. Component of the intraflagellar transport (IFT) complex B required for transport of proteins in the motile cilium. Required for transport of specific ciliary cargo proteins related to motility, while it is neither required for IFT complex B assembly or motion nor for cilium assembly. Plays a key role in maintaining the integrity of the IFT complex B and the proper ciliary localization of the IFT complex B components. Essential for maintaining proper microtubule organization within the ciliary axoneme. The sequence is that of Intraflagellar transport protein 56 from Danio rerio (Zebrafish).